The primary structure comprises 503 residues: MKAKIRILDMFSGRYTVLINEEDAKEAKLHPDDLVKIEAGKKAVYGSVALSNLVGKGEVGISRDVLDLHNFSEGETVSVIPAGTPESVRYIKKKMHGEKLRKVEIEAIVRDIVDRKLRDIEISSFVTALEINGLDMDEIAALTIAMAETGDMLDIDRKPIMDVHSIGGVPGNKTNILVVPIVAAAGLTIPKTSSRAITSAAGTADVVEVFADVSFSLDEIKRIVEKVGACLVWGGALNLAPADDITIKAERALSIDPTGLMLASIMSKKYAMGSQYVLIDIPTGKGVKVETVEEARSLARDFIELGKRLGQYVEVAITYGGQPIGHTVGPALEAREALSALMTGKGPGSLIEKATGLAGILLEMGGVAPAGTGKKMAKEILESGKAWEKMKEIIEAQGGDPNIKPEEIPIGDKTYTFTAATSGYVTAIDNRAITAIARAAGAPEDKGAGIELYVKVGEKVKEGDPLFTIHAEHEARLDQAIVLARRTEPIRIEGMVLQRIGNI.

AMP-binding positions include G168, 194–199 (SRAITS), and T203. The active-site Proton donor is the D256. Positions 264 and 288 each coordinate AMP.

Belongs to the thymidine/pyrimidine-nucleoside phosphorylase family. Type 2 subfamily. In terms of assembly, forms an exceptionally large macromolecular structure (&gt;40-mers) in solution.

It catalyses the reaction AMP + phosphate = alpha-D-ribose 1,5-bisphosphate + adenine. The catalysed reaction is CMP + phosphate = cytosine + alpha-D-ribose 1,5-bisphosphate. The enzyme catalyses UMP + phosphate = alpha-D-ribose 1,5-bisphosphate + uracil. AMP phosphorolysis is allosterically regulated by the substrate AMP. Its function is as follows. Catalyzes the conversion of AMP and phosphate to adenine and ribose 1,5-bisphosphate (R15P). Exhibits phosphorylase activity toward CMP, dCMP and UMP in addition to AMP. Functions in an archaeal AMP degradation pathway, together with R15P isomerase and RubisCO. This is AMP phosphorylase from Thermococcus kodakarensis (strain ATCC BAA-918 / JCM 12380 / KOD1) (Pyrococcus kodakaraensis (strain KOD1)).